Here is a 465-residue protein sequence, read N- to C-terminus: UDP-N-acetylmuramate--L-alanine ligase (465 aa).

125–131 (GTHGKTT) lines the ATP pocket.

The protein belongs to the MurCDEF family.

Its subcellular location is the cytoplasm. The catalysed reaction is UDP-N-acetyl-alpha-D-muramate + L-alanine + ATP = UDP-N-acetyl-alpha-D-muramoyl-L-alanine + ADP + phosphate + H(+). It functions in the pathway cell wall biogenesis; peptidoglycan biosynthesis. Its function is as follows. Cell wall formation. The polypeptide is UDP-N-acetylmuramate--L-alanine ligase (Deinococcus geothermalis (strain DSM 11300 / CIP 105573 / AG-3a)).